The sequence spans 192 residues: Phosphoheptose isomerase (192 aa).

The region spanning 35–192 (LIETLENQGK…CIERHFAHKN (158 aa)) is the SIS domain. 50–52 (NGG) is a binding site for substrate. Residues H59 and E63 each contribute to the Zn(2+) site. Residues E63, 92-93 (ND), 118-120 (STS), S123, and Q170 contribute to the substrate site. Residues Q170 and H178 each contribute to the Zn(2+) site.

Belongs to the SIS family. GmhA subfamily. In terms of assembly, homotetramer. The cofactor is Zn(2+).

It localises to the cytoplasm. The enzyme catalyses 2 D-sedoheptulose 7-phosphate = D-glycero-alpha-D-manno-heptose 7-phosphate + D-glycero-beta-D-manno-heptose 7-phosphate. It participates in carbohydrate biosynthesis; D-glycero-D-manno-heptose 7-phosphate biosynthesis; D-glycero-alpha-D-manno-heptose 7-phosphate and D-glycero-beta-D-manno-heptose 7-phosphate from sedoheptulose 7-phosphate: step 1/1. Functionally, catalyzes the isomerization of sedoheptulose 7-phosphate in D-glycero-D-manno-heptose 7-phosphate. The chain is Phosphoheptose isomerase from Helicobacter pylori (strain HPAG1).